The chain runs to 428 residues: Adenylosuccinate synthetase (428 aa).

Residues 12-18 (GDEGKGK) and 40-42 (GHT) contribute to the GTP site. The active-site Proton acceptor is the D13. Residues D13 and G40 each coordinate Mg(2+). IMP-binding positions include 13 to 16 (DEGK), 38 to 41 (NAGH), T130, R144, Q225, T240, and R304. The active-site Proton donor is H41. 300–306 (VTTGRSR) lines the substrate pocket. GTP-binding positions include R306, 332 to 334 (KID), and 414 to 416 (GVG).

The protein belongs to the adenylosuccinate synthetase family. In terms of assembly, homodimer. Mg(2+) serves as cofactor.

Its subcellular location is the cytoplasm. It carries out the reaction IMP + L-aspartate + GTP = N(6)-(1,2-dicarboxyethyl)-AMP + GDP + phosphate + 2 H(+). Its pathway is purine metabolism; AMP biosynthesis via de novo pathway; AMP from IMP: step 1/2. Plays an important role in the de novo pathway of purine nucleotide biosynthesis. Catalyzes the first committed step in the biosynthesis of AMP from IMP. In Clostridium botulinum (strain Alaska E43 / Type E3), this protein is Adenylosuccinate synthetase.